We begin with the raw amino-acid sequence, 223 residues long: Adenylate kinase 4, mitochondrial (223 aa).

15–20 (GSGKGT) is a binding site for a ribonucleoside 5'-triphosphate. The segment at 35 to 64 (SSGHFLRENIKANTEVGEMAKQYIEKSLLV) is NMP. AMP contacts are provided by Ser-36 and Arg-41. The residue at position 60 (Lys-60) is an N6-succinyllysine. Residues 62–64 (LLV), 89–92 (GFPR), and Gln-96 each bind AMP. The tract at residues 125 to 162 (RRWIHPPSGRVYNLDFNPPHVHGIDDVTGEPLVQQEDD) is LID. A ribonucleoside 5'-triphosphate is bound by residues Arg-126 and 135–136 (VY). Arg-170 contributes to the AMP binding site. Lys-175 bears the N6-acetyllysine mark. An N6-acetyllysine; alternate mark is found at Lys-179 and Lys-186. Lys-179 and Lys-186 each carry N6-succinyllysine; alternate. Thr-199 contacts a ribonucleoside 5'-triphosphate.

Belongs to the adenylate kinase family. AK3 subfamily. Monomer. Interacts with SLC25A5/ANT2.

It localises to the mitochondrion matrix. The catalysed reaction is a ribonucleoside 5'-phosphate + ATP = a ribonucleoside 5'-diphosphate + ADP. The enzyme catalyses AMP + ATP = 2 ADP. It carries out the reaction GTP + AMP = GDP + ADP. It catalyses the reaction CMP + ATP = CDP + ADP. The catalysed reaction is GTP + CMP = CDP + GDP. The enzyme catalyses dAMP + ATP = dADP + ADP. It carries out the reaction dCMP + ATP = dCDP + ADP. It catalyses the reaction a 2'-deoxyribonucleoside 5'-diphosphate + ATP = a 2'-deoxyribonucleoside 5'-triphosphate + ADP. The catalysed reaction is a ribonucleoside 5'-diphosphate + ATP = a ribonucleoside 5'-triphosphate + ADP. The enzyme catalyses GDP + ATP = GTP + ADP. It carries out the reaction CDP + GTP = CTP + GDP. It catalyses the reaction CDP + ATP = CTP + ADP. The catalysed reaction is UDP + ATP = UTP + ADP. The enzyme catalyses GTP + UDP = UTP + GDP. It carries out the reaction dADP + GTP = dATP + GDP. It catalyses the reaction dCDP + GTP = dCTP + GDP. The catalysed reaction is dCDP + ATP = dCTP + ADP. The enzyme catalyses dGDP + ATP = dGTP + ADP. It carries out the reaction dTDP + GTP = dTTP + GDP. It catalyses the reaction dTDP + ATP = dTTP + ADP. Its function is as follows. Broad-specificity mitochondrial nucleoside phosphate kinase involved in cellular nucleotide homeostasis by catalyzing nucleoside-phosphate interconversions. Similar to other adenylate kinases, preferentially catalyzes the phosphorylation of the nucleoside monophosphate AMP with ATP as phosphate donor to produce ADP. Phosphorylates only AMP when using GTP as phosphate donor. In vitro, can also catalyze the phosphorylation of CMP, dAMP and dCMP and use GTP as an alternate phosphate donor. Moreover, exhibits a diphosphate kinase activity, producing ATP, CTP, GTP, UTP, TTP, dATP, dCTP and dGTP from the corresponding diphosphate substrates with either ATP or GTP as phosphate donors. Plays a role in controlling cellular ATP levels by regulating phosphorylation and activation of the energy sensor protein kinase AMPK. Plays a protective role in the cellular response to oxidative stress. In Pongo abelii (Sumatran orangutan), this protein is Adenylate kinase 4, mitochondrial.